Reading from the N-terminus, the 315-residue chain is uncharacterized protein (315 aa).

Residues 1-23 (MSNTDALNTANTQITENVDTSSM) are compositionally biased toward polar residues. Residues 1–31 (MSNTDALNTANTQITENVDTSSMKVEKTHDS) form a disordered region.

This is an uncharacterized protein from Acanthamoeba polyphaga mimivirus (APMV).